The sequence spans 202 residues: Small ribosomal subunit protein uS4 (202 aa).

The 64-residue stretch at serine 94–leucine 157 folds into the S4 RNA-binding domain.

This sequence belongs to the universal ribosomal protein uS4 family. As to quaternary structure, part of the 30S ribosomal subunit. Contacts protein S5. The interaction surface between S4 and S5 is involved in control of translational fidelity.

Its function is as follows. One of the primary rRNA binding proteins, it binds directly to 16S rRNA where it nucleates assembly of the body of the 30S subunit. In terms of biological role, with S5 and S12 plays an important role in translational accuracy. This chain is Small ribosomal subunit protein uS4, found in Ureaplasma urealyticum serovar 10 (strain ATCC 33699 / Western).